A 108-amino-acid polypeptide reads, in one-letter code: Ig kappa chain V region GOM (108 aa).

Residues 1-23 form a framework-1 region; the sequence is DIVMTQTPLSLSVSPGEPASISC. Cys-23 and Cys-88 form a disulfide bridge. The interval 24-34 is complementarity-determining-1; that stretch reads RSSQSNLDYLN. Residues 35–49 form a framework-2 region; sequence WYLQKAGQSPRLLPE. Positions 44–66 are disordered; it reads PRLLPEQDSQRASGVPDRFSGSG. Positions 50 to 56 are complementarity-determining-2; it reads QDSQRAS. The tract at residues 57 to 88 is framework-3; that stretch reads GVPDRFSGSGSGTDFTLRIGRVEAEDAGIYYC. Positions 89–97 are complementarity-determining-3; the sequence is MQRSFYPYT. The tract at residues 98 to 107 is framework-4; sequence FGQGTRLEVR.

In Canis lupus familiaris (Dog), this protein is Ig kappa chain V region GOM.